The following is a 201-amino-acid chain: Superoxide dismutase [Mn] (201 aa).

Mn(2+) is bound by residues H27, H81, D163, and H167.

Belongs to the iron/manganese superoxide dismutase family. As to quaternary structure, homodimer. Mn(2+) serves as cofactor.

The catalysed reaction is 2 superoxide + 2 H(+) = H2O2 + O2. Its function is as follows. Destroys superoxide anion radicals which are normally produced within the cells and which are toxic to biological systems. May play a critical role against oxidative stress, affecting both the survival and the virulence of S.pneumoniae. The sequence is that of Superoxide dismutase [Mn] (sodA) from Streptococcus pneumoniae serotype 4 (strain ATCC BAA-334 / TIGR4).